A 548-amino-acid polypeptide reads, in one-letter code: Elongator complex protein 3 (548 aa).

One can recognise a Radical SAM core domain in the interval 83–373 (RTASGIAVVA…YRVQRDIPMP (291 aa)). [4Fe-4S] cluster is bound by residues Cys100, Cys110, and Cys113. Acetyl-CoA contacts are provided by residues Lys165, 475-478 (ELHV), 498-500 (FGM), and Tyr531. The N-acetyltransferase domain maps to 397–548 (TECRDVRTRE…EGPYMVKNLY (152 aa)).

Belongs to the ELP3 family. Component of the elongator complex. The cofactor is [4Fe-4S] cluster.

The protein localises to the cytoplasm. Its subcellular location is the nucleus. The enzyme catalyses uridine(34) in tRNA + acetyl-CoA + S-adenosyl-L-methionine + H2O = 5-(carboxymethyl)uridine(34) in tRNA + 5'-deoxyadenosine + L-methionine + CoA + 2 H(+). Its pathway is tRNA modification; 5-methoxycarbonylmethyl-2-thiouridine-tRNA biosynthesis. Catalytic tRNA acetyltransferase subunit of the elongator complex which is required for multiple tRNA modifications, including mcm5U (5-methoxycarbonylmethyl uridine), mcm5s2U (5-methoxycarbonylmethyl-2-thiouridine), and ncm5U (5-carbamoylmethyl uridine). In the elongator complex, acts as a tRNA uridine(34) acetyltransferase by mediating formation of carboxymethyluridine in the wobble base at position 34 in tRNAs. Involved in neurogenesis. Involved in somite development. This is Elongator complex protein 3 from Danio rerio (Zebrafish).